Reading from the N-terminus, the 238-residue chain is Glyceraldehyde 3-phosphate phosphatase (238 aa).

Belongs to the HAD-like hydrolase superfamily. It depends on Mg(2+) as a cofactor.

In terms of biological role, catalyzes the dephosphorylation of D,L-glyceraldehyde 3-phosphate in vitro. This Pyrococcus abyssi (strain GE5 / Orsay) protein is Glyceraldehyde 3-phosphate phosphatase.